Consider the following 280-residue polypeptide: MDLQGRGVPSIDRLRVLLMLFHTMAQIMAEQEVENLSGLSTNPEKDIFVVRENGTTCLMAEFAAKFIVPYDVWASNYVDLITEQADIALTRGAEVKGRCGHSQSELQVFWVDRAYALKMLFVKESHNMSKGPEATWRLSKVQFVYDSSEKTHFKDAVSAGKHTANSHHLSALVTPAGKSYECQAQQTISLASSDPQKTVTMILSAVHIQPFDIISDFVFSEEHKCPVDEREQLEETLPLILGLILGLVIMVTLAIYHVHHKMTANQVQIPRDRSQYKHMG.

The N-terminal stretch at 1–29 (MDLQGRGVPSIDRLRVLLMLFHTMAQIMA) is a signal peptide. Residues 30 to 235 (EQEVENLSGL…PVDEREQLEE (206 aa)) lie on the Extracellular side of the membrane. N-linked (GlcNAc...) asparagine glycosylation is found at Asn-35, Asn-53, and Asn-127. The helical transmembrane segment at 236–256 (TLPLILGLILGLVIMVTLAIY) threads the bilayer. Residues 257–280 (HVHHKMTANQVQIPRDRSQYKHMG) lie on the Cytoplasmic side of the membrane.

It belongs to the LAMP family. Glycosylated. In terms of tissue distribution, expressed in plasmocytoid dendritic cells. Expressed in suprabasal skin keratinocytes and squamous cells (at protein level). Expressed in the brain and weakly in spleen and skin. Expressed in plasmocytoid dendritic cells.

It localises to the cell membrane. The protein localises to the cytoplasmic vesicle. It is found in the secretory vesicle. Its subcellular location is the synaptic vesicle membrane. The protein resides in the endoplasmic reticulum-Golgi intermediate compartment membrane. It localises to the endosome membrane. The protein localises to the cytoplasmic vesicle membrane. It is found in the cell projection. Its subcellular location is the dendrite. The protein resides in the growth cone membrane. It localises to the early endosome membrane. The protein localises to the recycling endosome. Plays a role in short-term synaptic plasticity in a subset of GABAergic neurons in the brain. The sequence is that of Lysosome-associated membrane glycoprotein 5 (LAMP5) from Homo sapiens (Human).